The chain runs to 259 residues: MPRFALKVEYHGKPFAGWQRQKDQPSVQGAIEAALARIEPGEHTIAAAGRTDTGVHGLGQVAHCDLEKNWDPFRLSEALNYHLKPAPVAIVDAALVDDEWHARFSAVERQYLFRILMRRAPATHDEGQVWQIKHDLDVAAMQAGANMLLGNHDFTTFRSSICQAASPVKTLDELRVERVQGLSGPEVHFHVRARSFLHNQVRSFVGTLERVGTGAWSPEDVKHALEAKDRAACGPVCPGHGLYLARVGYPDPVFSSDRV.

D52 functions as the Nucleophile in the catalytic mechanism. Y111 contacts substrate.

Belongs to the tRNA pseudouridine synthase TruA family. In terms of assembly, homodimer.

It carries out the reaction uridine(38/39/40) in tRNA = pseudouridine(38/39/40) in tRNA. Its function is as follows. Formation of pseudouridine at positions 38, 39 and 40 in the anticodon stem and loop of transfer RNAs. In Ruegeria sp. (strain TM1040) (Silicibacter sp.), this protein is tRNA pseudouridine synthase A.